Consider the following 71-residue polypeptide: DNA-directed RNA polymerases II, IV and V subunit 10 (71 aa).

Zn(2+) is bound by residues cysteine 7, cysteine 10, cysteine 44, and cysteine 45.

It belongs to the archaeal Rpo10/eukaryotic RPB10 RNA polymerase subunit family. In terms of assembly, component of the RNA polymerase II, IV and V complexes. Interacts with NRPD1.

The protein localises to the nucleus. In terms of biological role, DNA-dependent RNA polymerase catalyzes the transcription of DNA into RNA using the four ribonucleoside triphosphates as substrates. Component of RNA polymerase II which synthesizes mRNA precursors and many functional non-coding RNAs. Pol II is the central component of the basal RNA polymerase II transcription machinery. It is composed of mobile elements that move relative to each other. Component of RNA polymerases IV and V which mediate short-interfering RNAs (siRNA) accumulation and subsequent RNA-directed DNA methylation-dependent (RdDM) transcriptional gene silencing (TGS) of endogenous repeated sequences, including transposable elements. The polypeptide is DNA-directed RNA polymerases II, IV and V subunit 10 (NRPB10) (Arabidopsis thaliana (Mouse-ear cress)).